The following is a 156-amino-acid chain: MSRRKNVKKRPIPPDPVYNSCLVSMTIRRIMRSGKKSLAANIVYDALKTVGERTGQEPLEVFEKAVKNATPLVEVKARRVGGATYQVPMEVRSNRGSTLALRWLVHYARTRGGKTMAGKLANEIMDAANETGGTIKKREETHRMAEANKAFAHYRY.

This sequence belongs to the universal ribosomal protein uS7 family. Part of the 30S ribosomal subunit. Contacts proteins S9 and S11.

Its function is as follows. One of the primary rRNA binding proteins, it binds directly to 16S rRNA where it nucleates assembly of the head domain of the 30S subunit. Is located at the subunit interface close to the decoding center, probably blocks exit of the E-site tRNA. This chain is Small ribosomal subunit protein uS7, found in Microcystis aeruginosa (strain NIES-843 / IAM M-2473).